Consider the following 93-residue polypeptide: Large ribosomal subunit protein eL37A (93 aa).

4 residues coordinate Zn(2+): cysteine 19, cysteine 22, cysteine 34, and cysteine 37. Residues cysteine 19–cysteine 37 form a C4-type zinc finger.

This sequence belongs to the eukaryotic ribosomal protein eL37 family. It depends on Zn(2+) as a cofactor.

Binds to the 23S rRNA. The chain is Large ribosomal subunit protein eL37A from Drosophila melanogaster (Fruit fly).